Consider the following 1227-residue polypeptide: Multifunctional 2-oxoglutarate metabolism enzyme (1227 aa).

Residues 1–41 (MSSSPSPFGQNEWLVEEMYRKFRDDPSSVDPSWHEFLVDYS) form a 2-oxoglutarate dehydrogenase E1, N-terminal part region. A compositionally biased stretch (basic and acidic residues) spans 23–37 (RDDPSSVDPSWHEFL). The disordered stretch occupies residues 23 to 102 (RDDPSSVDPS…SATPAKGDES (80 aa)). The interval 42–88 (PEPTTDSASNGRTTTAAPVTPPTPAPAPAPEPKAAPKPAAKTEAKPA) is linker. The span at 43 to 53 (EPTTDSASNGR) shows a compositional bias: polar residues. The span at 60–76 (VTPPTPAPAPAPEPKAA) shows a compositional bias: pro residues. The segment covering 88 to 97 (AKPAKSATPA) has biased composition (low complexity). The interval 89–335 (KPAKSATPAK…LRTIHQLLLD (247 aa)) is succinyltransferase E2. The active-site Proton acceptor; for succinyltransferase activity is His-314. The tract at residues 336 to 1227 (DDFFDEIFRE…QQEILDTAFG (892 aa)) is 2-oxoglutarate dehydrogenase E1, C-terminal part. Arg-540 is a thiamine diphosphate binding site. Residues His-579 and Ser-604 each coordinate 2-oxoglutarate. Residues Ser-604, Leu-606, Asp-645, Ala-646, Ala-647, and Asn-678 each coordinate thiamine diphosphate. Asp-645 is a binding site for Mg(2+). Mg(2+)-binding residues include Asn-678 and Ile-680. A coiled-coil region spans residues 783 to 814 (DISMKEAEDALRDYQGQLERVFNEVRELEKHE). Residue His-1020 participates in 2-oxoglutarate binding. Residues Thr-1038, Arg-1054, Lys-1089, Ser-1092, Gln-1142, Arg-1149, and Arg-1150 each contribute to the acetyl-CoA site.

Belongs to the 2-oxoacid dehydrogenase family. Kgd subfamily. In terms of assembly, homodimer. Interacts with the FHA domain of unphosphorylated GarA. The 2-oxoglutarate dehydrogenase (ODH) complex contains multiple copies of three enzymatic components: 2-oxoglutarate dehydrogenase (E1), dihydrolipoamide succinyltransferase (E2) and lipoamide dehydrogenase (E3). The cofactor is Mg(2+). Thiamine diphosphate is required as a cofactor.

It catalyses the reaction glyoxylate + 2-oxoglutarate + H(+) = 2-hydroxy-3-oxoadipate + CO2. The catalysed reaction is 2-oxoglutarate + H(+) = succinate semialdehyde + CO2. It carries out the reaction N(6)-[(R)-lipoyl]-L-lysyl-[protein] + 2-oxoglutarate + H(+) = N(6)-[(R)-S(8)-succinyldihydrolipoyl]-L-lysyl-[protein] + CO2. The enzyme catalyses N(6)-[(R)-dihydrolipoyl]-L-lysyl-[protein] + succinyl-CoA = N(6)-[(R)-S(8)-succinyldihydrolipoyl]-L-lysyl-[protein] + CoA. The protein operates within carbohydrate metabolism; tricarboxylic acid cycle; succinate from 2-oxoglutarate (transferase route): step 1/2. It participates in carbohydrate metabolism; tricarboxylic acid cycle; succinyl-CoA from 2-oxoglutarate (dehydrogenase route): step 1/1. Alpha-ketoglutarate dehydrogenase and decarboxylase activities are inhibited by unphosphorylated GarA, and allosterically activated by acetyl-CoA, the main substrate of the TCA cycle. Both the phosphoadenosine and acetyl moieties of acetyl-CoA are important for activation because neither CoA nor the synthetic compound S-(2-acetamidoethyl)-ethanethioate (which mimics the terminal acetyl-phosphopantetheine group of acetyl-CoA) has an activation effect. Its function is as follows. Shows three enzymatic activities that share a first common step, the attack of thiamine-PP on 2-oxoglutarate (alpha-ketoglutarate, KG), leading to the formation of an enamine-thiamine-PP intermediate upon decarboxylation. Thus, displays KGD activity, catalyzing the decarboxylation from five-carbon 2-oxoglutarate to four-carbon succinate semialdehyde (SSA). Also catalyzes C-C bond formation between the activated aldehyde formed after decarboxylation of alpha-ketoglutarate and the carbonyl of glyoxylate (GLX), to yield 2-hydroxy-3-oxoadipate (HOA), which spontaneously decarboxylates to form 5-hydroxylevulinate (HLA). And is also a component of the 2-oxoglutarate dehydrogenase (ODH) complex, that catalyzes the overall conversion of 2-oxoglutarate to succinyl-CoA and CO(2). The KG decarboxylase and KG dehydrogenase reactions provide two alternative, tightly regulated, pathways connecting the oxidative and reductive branches of the TCA cycle. This chain is Multifunctional 2-oxoglutarate metabolism enzyme (kgd), found in Mycolicibacterium smegmatis (strain ATCC 700084 / mc(2)155) (Mycobacterium smegmatis).